Reading from the N-terminus, the 219-residue chain is Thiopurine S-methyltransferase (219 aa).

Residues W10, L45, E66, and R130 each coordinate S-adenosyl-L-methionine.

The protein belongs to the class I-like SAM-binding methyltransferase superfamily. TPMT family.

It localises to the cytoplasm. It catalyses the reaction S-adenosyl-L-methionine + a thiopurine = S-adenosyl-L-homocysteine + a thiopurine S-methylether.. The protein is Thiopurine S-methyltransferase of Psychrobacter cryohalolentis (strain ATCC BAA-1226 / DSM 17306 / VKM B-2378 / K5).